We begin with the raw amino-acid sequence, 90 residues long: Large ribosomal subunit protein uL23c (90 aa).

This sequence belongs to the universal ribosomal protein uL23 family. As to quaternary structure, part of the 50S ribosomal subunit.

Its subcellular location is the plastid. It localises to the chloroplast. Its function is as follows. Binds to 23S rRNA. The sequence is that of Large ribosomal subunit protein uL23c (rpl23) from Tetradesmus obliquus (Green alga).